A 95-amino-acid polypeptide reads, in one-letter code: Aspartyl/glutamyl-tRNA(Asn/Gln) amidotransferase subunit C (95 aa).

Belongs to the GatC family. As to quaternary structure, heterotrimer of A, B and C subunits.

The enzyme catalyses L-glutamyl-tRNA(Gln) + L-glutamine + ATP + H2O = L-glutaminyl-tRNA(Gln) + L-glutamate + ADP + phosphate + H(+). The catalysed reaction is L-aspartyl-tRNA(Asn) + L-glutamine + ATP + H2O = L-asparaginyl-tRNA(Asn) + L-glutamate + ADP + phosphate + 2 H(+). Allows the formation of correctly charged Asn-tRNA(Asn) or Gln-tRNA(Gln) through the transamidation of misacylated Asp-tRNA(Asn) or Glu-tRNA(Gln) in organisms which lack either or both of asparaginyl-tRNA or glutaminyl-tRNA synthetases. The reaction takes place in the presence of glutamine and ATP through an activated phospho-Asp-tRNA(Asn) or phospho-Glu-tRNA(Gln). In Prochlorococcus marinus (strain NATL1A), this protein is Aspartyl/glutamyl-tRNA(Asn/Gln) amidotransferase subunit C.